A 599-amino-acid chain; its full sequence is Beta-(1--&gt;2)glucan export ATP-binding/permease protein NdvA (599 aa).

Positions 21-301 (TITMCVASVL…ISAFINQTVT (281 aa)) constitute an ABC transmembrane type-1 domain. The next 5 helical transmembrane spans lie at 22–42 (ITMC…PVLF), 55–75 (IFSP…AAVF), 156–176 (MRMS…GQLV), 248–268 (MAST…VTKG), and 276–296 (IAFI…SAFI). In terms of domain architecture, ABC transporter spans 335–569 (IVFDNVTFEF…GGRFSDLLRA (235 aa)). 368 to 375 (GPTGAGKT) contributes to the ATP binding site.

This sequence belongs to the ABC transporter superfamily. Beta-(1--&gt;2)glucan exporter (TC 3.A.1.108.1) family. In terms of assembly, homodimer.

The protein localises to the cell inner membrane. The catalysed reaction is [(1-&gt;2)-beta-D-glucosyl](n)(in) + ATP + H2O = [(1-&gt;2)-beta-D-glucosyl](n)(out) + ADP + phosphate + H(+). In terms of biological role, involved in beta-(1--&gt;2)glucan export. Transmembrane domains (TMD) form a pore in the inner membrane and the ATP-binding domain (NBD) is responsible for energy generation. This is Beta-(1--&gt;2)glucan export ATP-binding/permease protein NdvA from Brucella suis biovar 1 (strain 1330).